The chain runs to 238 residues: Ribonuclease PH (238 aa).

Residues R86 and 124-126 (GTR) contribute to the phosphate site.

Belongs to the RNase PH family. In terms of assembly, homohexameric ring arranged as a trimer of dimers.

It catalyses the reaction tRNA(n+1) + phosphate = tRNA(n) + a ribonucleoside 5'-diphosphate. In terms of biological role, phosphorolytic 3'-5' exoribonuclease that plays an important role in tRNA 3'-end maturation. Removes nucleotide residues following the 3'-CCA terminus of tRNAs; can also add nucleotides to the ends of RNA molecules by using nucleoside diphosphates as substrates, but this may not be physiologically important. Probably plays a role in initiation of 16S rRNA degradation (leading to ribosome degradation) during starvation. In Alkalilimnicola ehrlichii (strain ATCC BAA-1101 / DSM 17681 / MLHE-1), this protein is Ribonuclease PH.